Here is a 455-residue protein sequence, read N- to C-terminus: Chromosomal replication initiator protein DnaA (455 aa).

Residues 1 to 82 form a domain I, interacts with DnaA modulators region; the sequence is MNRNTSSLWA…NPDFVVKLVE (82 aa). Residues 82-117 are domain II; it reads EGVKPAPKQNNIVTTKQNAETAVDSEQHLQSVEFKT. The domain III, AAA+ region stretch occupies residues 118–335; the sequence is GLNSNHLFEN…GALNRVIANA (218 aa). ATP contacts are provided by glycine 163, glycine 165, lysine 166, and threonine 167. Positions 336-455 are domain IV, binds dsDNA; that stretch reads EFTGKTITID…WSNLIRTLSA (120 aa).

Belongs to the DnaA family. As to quaternary structure, oligomerizes as a right-handed, spiral filament on DNA at oriC.

The protein localises to the cytoplasm. Plays an essential role in the initiation and regulation of chromosomal replication. ATP-DnaA binds to the origin of replication (oriC) to initiate formation of the DNA replication initiation complex once per cell cycle. Binds the DnaA box (a 9 base pair repeat at the origin) and separates the double-stranded (ds)DNA. Forms a right-handed helical filament on oriC DNA; dsDNA binds to the exterior of the filament while single-stranded (ss)DNA is stabiized in the filament's interior. The ATP-DnaA-oriC complex binds and stabilizes one strand of the AT-rich DNA unwinding element (DUE), permitting loading of DNA polymerase. After initiation quickly degrades to an ADP-DnaA complex that is not apt for DNA replication. Binds acidic phospholipids. This is Chromosomal replication initiator protein DnaA from Actinobacillus succinogenes (strain ATCC 55618 / DSM 22257 / CCUG 43843 / 130Z).